A 348-amino-acid chain; its full sequence is Alpha-2-HS-glycoprotein (348 aa).

A signal peptide spans 1-18 (MKTLVLLLCFTLLWGCQS). Residues 19-133 (APQGTGLGFR…QFSVMHTKCH (115 aa)) form the Cystatin fetuin-A-type 1 domain. Cystine bridges form between cysteine 32-cysteine 339, cysteine 89-cysteine 100, cysteine 114-cysteine 132, cysteine 146-cysteine 149, cysteine 208-cysteine 219, and cysteine 230-cysteine 247. The N-linked (GlcNAc...) asparagine glycan is linked to asparagine 99. A phosphoserine mark is found at serine 134 and serine 138. The region spanning 144–255 (KVCPHCALLT…TCTAFPTQAN (112 aa)) is the Cystatin fetuin-A-type 2 domain. 2 N-linked (GlcNAc...) asparagine glycosylation sites follow: asparagine 156 and asparagine 176. Residues serine 307, serine 311, serine 314, and serine 316 each carry the phosphoserine modification.

This sequence belongs to the fetuin family. Phosphorylated by FAM20C in the extracellular medium. In terms of tissue distribution, expressed by the liver and secreted in plasma.

The protein localises to the secreted. This chain is Alpha-2-HS-glycoprotein (AHSG), found in Meriones unguiculatus (Mongolian jird).